The sequence spans 1380 residues: Hepatocyte growth factor receptor (1380 aa).

Positions 1-24 are cleaved as a signal peptide; the sequence is MKAPAALAPGILVLLLTLVQKGGG. The Extracellular portion of the chain corresponds to 25-931; it reads ECREALAKSE…VIVQPDQNFT (907 aa). The region spanning 27–513 is the Sema domain; that stretch reads REALAKSEMN…TGKKITKIPL (487 aa). A glycan (N-linked (GlcNAc...) asparagine) is linked at Asn-45. Disulfide bonds link Cys-95/Cys-101, Cys-98/Cys-156, Cys-129/Cys-137, and Cys-170/Cys-173. A glycan (N-linked (GlcNAc...) asparagine) is linked at Asn-200. 2 disulfide bridges follow: Cys-296/Cys-361 and Cys-383/Cys-395. 2 N-linked (GlcNAc...) asparagine glycosylation sites follow: Asn-397 and Asn-403. 4 cysteine pairs are disulfide-bonded: Cys-518-Cys-536, Cys-524-Cys-559, Cys-527-Cys-543, and Cys-539-Cys-549. N-linked (GlcNAc...) asparagine glycosylation is present at Asn-551. 3 IPT/TIG domains span residues 561–654, 656–738, and 741–835; these read PTIY…FSYV, PEIT…FSYQ, and PLVV…LIYV. The O-linked (Man) threonine glycan is linked to Thr-580. 3 N-linked (GlcNAc...) asparagine glycosylation sites follow: Asn-592, Asn-605, and Asn-633. O-linked (Man) threonine glycosylation is found at Thr-675 and Thr-760. N-linked (GlcNAc...) asparagine glycans are attached at residues Asn-784, Asn-878, and Asn-929. Residues 932–954 traverse the membrane as a helical segment; the sequence is GLIVGVVSISVILLSSLGLFLWL. At 955–1380 the chain is on the cytoplasmic side; the sequence is KKRKQIKDLG…HDTVDGEVDT (426 aa). Position 965 is a phosphoserine (Ser-965). Thr-976 carries the phosphothreonine modification. Phosphoserine occurs at positions 989, 996, and 999. Tyr-1002 bears the Phosphotyrosine mark. The Protein kinase domain occupies 1077-1344; it reads VHFNEVIGRG…RISAIFSTFI (268 aa). ATP contacts are provided by residues 1083 to 1091 and Lys-1109; that span reads IGRGHFGCV. The Proton acceptor role is filled by Asp-1203. Residues 1211-1380 are interaction with RANBP9; that stretch reads LDGKFTVKVA…HDTVDGEVDT (170 aa). Tyr-1229 is modified (phosphotyrosine). Residues Tyr-1233 and Tyr-1234 each carry the phosphotyrosine; by autocatalysis modification. The residue at position 1288 (Thr-1288) is a Phosphothreonine. An interaction with MUC20 region spans residues 1319 to 1358; the sequence is WHPKAEMRPSFTELVSRISAIFSTFIGEHYVHVNATYVNV. Phosphotyrosine; by autocatalysis is present on residues Tyr-1348 and Tyr-1355. Tyr-1364 is subject to Phosphotyrosine.

It belongs to the protein kinase superfamily. Tyr protein kinase family. In terms of assembly, heterodimer made of an alpha chain (50 kDa) and a beta chain (145 kDa) which are disulfide linked. Binds PLXNB1. Interacts when phosphorylated with downstream effectors including STAT3, PIK3R1, SRC, PCLG1, GRB2 and GAB1. Interacts with SPSB1, SPSB2 and SPSB4. Interacts with INPP5D/SHIP1. When phosphorylated at Tyr-1355, interacts with INPPL1/SHIP2. Interacts with RANBP9 and RANBP10, as well as SPSB1, SPSB2, SPSB3 and SPSB4. SPSB1 binding occurs in the presence and in the absence of HGF, however HGF treatment has a positive effect on this interaction. Interacts with MUC20; prevents interaction with GRB2 and suppresses hepatocyte growth factor-induced cell proliferation. Interacts with GRB10. Interacts with PTPN1 and PTPN2. Interacts with HSP90AA1 and HSP90AB1; the interaction suppresses MET kinase activity. Interacts with tensin TNS3. Interacts (when phosphorylated) with tensin TNS4 (via SH2 domain); the interaction increases MET protein stability by inhibiting MET endocytosis and subsequent lysosomal degradation. Autophosphorylated in response to ligand binding on Tyr-1233 and Tyr-1234 in the kinase domain leading to further phosphorylation of Tyr-1348 and Tyr-1355 in the C-terminal multifunctional docking site. Dephosphorylated by PTPRJ at Tyr-1348 and Tyr-1364. Dephosphorylated by PTPN1 and PTPN2. In terms of processing, ubiquitinated. Ubiquitination by CBL regulates the receptor stability and activity through proteasomal degradation. Post-translationally, O-mannosylation of IPT/TIG domains by TMEM260 is required for protein maturation. O-mannosylated residues are composed of single mannose glycans that are not elongated or modified.

The protein resides in the membrane. It carries out the reaction L-tyrosyl-[protein] + ATP = O-phospho-L-tyrosyl-[protein] + ADP + H(+). Its activity is regulated as follows. In its inactive state, the C-terminal tail interacts with the catalytic domain and inhibits the kinase activity. Upon ligand binding, the C-terminal tail is displaced and becomes phosphorylated, thus increasing the kinase activity. Receptor tyrosine kinase that transduces signals from the extracellular matrix into the cytoplasm by binding to hepatocyte growth factor/HGF ligand. Regulates many physiological processes including proliferation, scattering, morphogenesis and survival. Ligand binding at the cell surface induces autophosphorylation of MET on its intracellular domain that provides docking sites for downstream signaling molecules. Following activation by ligand, interacts with the PI3-kinase subunit PIK3R1, PLCG1, SRC, GRB2, STAT3 or the adapter GAB1. Recruitment of these downstream effectors by MET leads to the activation of several signaling cascades including the RAS-ERK, PI3 kinase-AKT, or PLCgamma-PKC. The RAS-ERK activation is associated with the morphogenetic effects while PI3K/AKT coordinates prosurvival effects. During embryonic development, MET signaling plays a role in gastrulation, development and migration of muscles and neuronal precursors, angiogenesis and kidney formation. In adults, participates in wound healing as well as organ regeneration and tissue remodeling. Also promotes differentiation and proliferation of hematopoietic cells. The sequence is that of Hepatocyte growth factor receptor (MET) from Echinops telfairi (Lesser hedgehog tenrec).